A 249-amino-acid chain; its full sequence is Exosome complex component Rrp41 (249 aa).

The protein belongs to the RNase PH family. Rrp41 subfamily. As to quaternary structure, component of the archaeal exosome complex. Forms a hexameric ring-like arrangement composed of 3 Rrp41-Rrp42 heterodimers. The hexameric ring associates with a trimer of Rrp4 and/or Csl4 subunits.

It localises to the cytoplasm. Catalytic component of the exosome, which is a complex involved in RNA degradation. Has 3'-&gt;5' exoribonuclease activity. Can also synthesize heteromeric RNA-tails. The polypeptide is Exosome complex component Rrp41 (Pyrococcus abyssi (strain GE5 / Orsay)).